A 392-amino-acid polypeptide reads, in one-letter code: ERBB-3 BINDING PROTEIN 1 (392 aa).

2 necessary for nucleolar localization regions span residues 1–50 and 298–392; these read MSSD…IVDI and HLQP…NAQE. Residues 48-56 form an RNA-binding region; sequence VDICEKGDS. Residues 355–372 are interaction with RNA; sequence GIKKKKGGGKKKKAQKAG. Positions 357–367 match the Nuclear localization signal motif; sequence KKKKGGGKKKK. Residues 358–369 show a composition bias toward basic residues; the sequence is KKKGGGKKKKAQ. Residues 358–392 are disordered; that stretch reads KKKGGGKKKKAQKAGEKGEASTEAEPMDASSNAQE.

It belongs to the peptidase M24 family. In terms of assembly, component of a ribonucleoprotein complex. Interacts with REIL1 and REIL2. As to expression, strongly expressed in calls, roots and flowers, to a lower extent, in stems and siliques, but hardly detectable in leaves.

The protein resides in the nucleus. Functionally, binds RNA. Associates with 28S, 18S and 5.8S mature rRNAs, several rRNA precursors and probably U3 small nucleolar RNA. May be involved in regulation of intermediate and late steps of rRNA processing. May be involved in ribosome assembly. Required for expression of cell cycle genes such as CYCD3-1, RNR2A and CDKB1-1. Promotes, in a dose- and auxin-dependent manner, organ growth by stimulating both cell proliferation and expansion, via the regulation of RBR1 levels. The sequence is that of ERBB-3 BINDING PROTEIN 1 from Arabidopsis thaliana (Mouse-ear cress).